Consider the following 225-residue polypeptide: Prepilin leader peptidase/N-methyltransferase (225 aa).

The Periplasmic segment spans residues 1–2 (MT). Residues 3 to 23 (MLLPLFILVGFIADYFVNAIA) traverse the membrane as a helical segment. Residues 24–67 (YHLSPLEDKTALTFRQVLVHFRQKKYAWHDTVPLILCVAAAIAC) are Cytoplasmic-facing. A helical membrane pass occupies residues 68–88 (ALAPFTPIVTGALFLYFCFVL). Topologically, residues 89 to 103 (TLSVIDFRTQLLPDK) are periplasmic. A helical membrane pass occupies residues 104 to 124 (LTLPLLWLGLVFNAQYGLIDL). The Cytoplasmic segment spans residues 125 to 127 (HDA). The helical transmembrane segment at 128–148 (VYGAVAGYGVLWCVYWGVWLV) threads the bilayer. Topologically, residues 149–174 (CHKEGLGYGDFKLLAAAGAWCGWQTL) are periplasmic. A helical transmembrane segment spans residues 175–195 (PMILLIASLGGIGYAIVSQLL). The Cytoplasmic segment spans residues 196-202 (QRRTITT). The chain crosses the membrane as a helical span at residues 203-223 (IAFGPWLALGSMINLGYLAWI). Topologically, residues 224 to 225 (SY) are periplasmic.

The protein belongs to the peptidase A24 family.

The protein localises to the cell inner membrane. It carries out the reaction Typically cleaves a -Gly-|-Phe- bond to release an N-terminal, basic peptide of 5-8 residues from type IV prepilin, and then N-methylates the new N-terminal amino group, the methyl donor being S-adenosyl-L-methionine.. In terms of biological role, plays a role in type II pseudopili formation by proteolytically removing the leader sequence from substrate proteins and subsequently monomethylating the alpha-amino group of the newly exposed N-terminal phenylalanine. Substrates include proteins required for biogenesis of the type II general secretory apparatus. This is Prepilin leader peptidase/N-methyltransferase (gspO) from Escherichia coli (strain K12).